Reading from the N-terminus, the 888-residue chain is Dilute domain-containing protein YPR089W (888 aa).

The Dilute domain occupies 360–745 (DIVLQSYWLS…KKFLNNKIKD (386 aa)). Disordered stretches follow at residues 462 to 504 (KEQQ…NNSS), 805 to 827 (KQRQ…TGDE), and 865 to 888 (LNIP…QNPW). Composition is skewed to polar residues over residues 809-823 (NEPQ…TSDF) and 867-880 (IPSS…WSNN).

The protein localises to the golgi apparatus. The chain is Dilute domain-containing protein YPR089W from Saccharomyces cerevisiae (strain ATCC 204508 / S288c) (Baker's yeast).